A 325-amino-acid polypeptide reads, in one-letter code: Coiled-coil domain-containing protein 160 (325 aa).

Disordered regions lie at residues serine 18–glutamate 45 and glutamate 81–aspartate 123. Positions glutamate 81–threonine 91 are enriched in basic and acidic residues. Residues aspartate 92–aspartate 123 show a composition bias toward polar residues. Residues lysine 144–glutamate 288 adopt a coiled-coil conformation.

This sequence belongs to the CCDC160 family.

This Homo sapiens (Human) protein is Coiled-coil domain-containing protein 160 (CCDC160).